A 261-amino-acid chain; its full sequence is uncharacterized protein (261 aa).

This sequence belongs to the BtpA family.

This is an uncharacterized protein from Thermococcus kodakarensis (strain ATCC BAA-918 / JCM 12380 / KOD1) (Pyrococcus kodakaraensis (strain KOD1)).